The primary structure comprises 1279 residues: Photoreceptor cilium actin regulator (1279 aa).

Glycine 2 carries N-myristoyl glycine lipidation. Cysteine 3 carries the S-palmitoyl cysteine lipid modification. Disordered stretches follow at residues 101–168 (NKPQ…KGRV), 380–598 (AAQV…SHVE), 802–821 (EVSESEDISGDVEEDLENLP), 860–1107 (ASHP…TTAK), and 1127–1279 (KSSS…KEIS). A compositionally biased stretch (basic and acidic residues) spans 126 to 168 (FSGKESKENTPQETSKGNRESVCHQPDSQDHCRQSATESKGRV). The span at 477 to 491 (SEEEDCSPEEEDELS) shows a compositional bias: acidic residues. Basic and acidic residues-rich tracts occupy residues 535–547 (LKMKEAISERIKF) and 580–598 (GPERQRRSQSEGCLKSHVE). Acidic residues predominate over residues 804 to 818 (SESEDISGDVEEDLE). Polar residues-rich tracts occupy residues 886–901 (GSGSSPRLHSTRSGST), 913–925 (DLNSKQTASPSSE), and 955–965 (TNPTPGQSRTL). The span at 972-990 (FSRDPHSSEASRKGPERSL) shows a compositional bias: basic and acidic residues. The segment covering 1047 to 1062 (RKTTSPPCQHPQSNPA) has biased composition (polar residues). The segment covering 1076 to 1090 (PSSASCSSPSVSPSR) has biased composition (low complexity). The segment covering 1091 to 1100 (GSKDSIHSED) has biased composition (basic and acidic residues). The segment covering 1226 to 1241 (WNNSRVPELQGSSTKR) has biased composition (polar residues). Positions 1259 to 1279 (RMNRGQDRPQPESQPQHKEIS) are enriched in basic and acidic residues.

Specifically expressed in retina.

It localises to the cell projection. The protein resides in the cilium. It is found in the photoreceptor outer segment. The protein localises to the photoreceptor inner segment. Plays an essential role for normal photoreceptor cell maintenance and vision. The chain is Photoreceptor cilium actin regulator from Mus musculus (Mouse).